Here is a 453-residue protein sequence, read N- to C-terminus: MSPQTETKAGVGFKAGVKEYKLTYYTPEYETKDTDILAAFRVTPQPGVPPEERGAAVAAESSTGTWTTVWTDGLTSLDRYKGRCYHIEPVPGEEEQFIAYVAYPLDLFEEGSVTNMFTSIVGNVFGFKALRALRLEDLRIPVAYVKTFQGPPHGIQVERDKLNKYGRPLLGCTIKPKLGLSAKNYGRAVYECLRGGLDFTKDDENVNSQPFMRWRDRFLFCAEAIYKSQAETGEIKGHYLNATAGTCEDMMKRAVFARELGVPIVMHDYLTGGFTANTTLAHYCRDNGLLLHIHRAMHAVIDRQKNHGMHFRVLAKALRMSGGDHIHAGTVVGKLEGERDITLGFVDLLRDDYIEKDRSRGIYFTQDWVSLPGVLPVASRGIHVWHMPALTEIFGDDSVLQFGGGTLGHPWGNAPGAVANRVALEACVKARNEGRDLAVDGGDIIREACKWSP.

Positions 1 to 2 (MS) are excised as a propeptide. Residue proline 3 is modified to N-acetylproline. Lysine 14 is subject to N6,N6,N6-trimethyllysine. Substrate contacts are provided by asparagine 123 and threonine 173. Lysine 175 (proton acceptor) is an active-site residue. Lysine 177 is a binding site for substrate. The Mg(2+) site is built by lysine 201, aspartate 203, and glutamate 204. The residue at position 201 (lysine 201) is an N6-carboxylysine. The active-site Proton acceptor is the histidine 294. Substrate contacts are provided by arginine 295, histidine 327, and serine 379.

It belongs to the RuBisCO large chain family. Type I subfamily. In terms of assembly, heterohexadecamer of 8 large chains and 8 small chains; disulfide-linked. The disulfide link is formed within the large subunit homodimers. It depends on Mg(2+) as a cofactor. Post-translationally, the disulfide bond which can form in the large chain dimeric partners within the hexadecamer appears to be associated with oxidative stress and protein turnover.

It is found in the plastid. Its subcellular location is the chloroplast. It catalyses the reaction 2 (2R)-3-phosphoglycerate + 2 H(+) = D-ribulose 1,5-bisphosphate + CO2 + H2O. The catalysed reaction is D-ribulose 1,5-bisphosphate + O2 = 2-phosphoglycolate + (2R)-3-phosphoglycerate + 2 H(+). Its function is as follows. RuBisCO catalyzes two reactions: the carboxylation of D-ribulose 1,5-bisphosphate, the primary event in carbon dioxide fixation, as well as the oxidative fragmentation of the pentose substrate in the photorespiration process. Both reactions occur simultaneously and in competition at the same active site. This Asperula laevigata (Smooth woodruff) protein is Ribulose bisphosphate carboxylase large chain.